Here is a 677-residue protein sequence, read N- to C-terminus: Transcription factor IIIB 90 kDa subunit (677 aa).

Residues 2–33 form a TFIIB-type zinc finger; that stretch reads TGRVCRGCGGTDIELDAARGDAVCTACGSVLE. The Zn(2+) site is built by Cys6, Cys9, Cys25, and Cys28. Tandem repeats lie at residues 91-172 and 185-269. Disordered stretches follow at residues 340-368 and 385-413; these read KGGLASLAKDGSTEDTASSLCGEEDTEDE and LLGGAPGSSEAAGSPEWGGRPPALGSLLD. Phosphothreonine is present on Thr365. Residue Ser450 is modified to Phosphoserine. 2 disordered regions span residues 501-521 and 544-653; these read YKEHKPKKSCKRREPIQASTA and RGLS…EDGE. The residue at position 553 (Ser553) is a Phosphoserine. A compositionally biased stretch (acidic residues) spans 640–653; it reads EEADEEEPDEEDGE.

Belongs to the TFIIB family. As to quaternary structure, TFIIIB comprises at least the TATA-binding protein (TBP) and the B-related factor 1 (BRF1/TFIIIB90). Interacts with BDP1. Interacts with MAF1.

Its subcellular location is the nucleus. General activator of RNA polymerase which utilizes different TFIIIB complexes at structurally distinct promoters. The isoform 1 is involved in the transcription of tRNA, adenovirus VA1, 7SL and 5S RNA. Isoform 2 is required for transcription of the U6 promoter. This is Transcription factor IIIB 90 kDa subunit (BRF1) from Homo sapiens (Human).